Reading from the N-terminus, the 734-residue chain is Photosystem I P700 chlorophyll a apoprotein A2 (734 aa).

A run of 8 helical transmembrane segments spans residues 46–69, 135–158, 175–199, 273–291, 330–353, 369–395, 417–439, and 517–535; these read IFASHFGQLAIIFLWTSGNLFHVA, LYTGALFLLFLSAISLIAGWLHLQ, LNHHLSGLFGVSSLAWTGHLVHVAI, MAHHHLAIAFIFLVAGHMY, IHFQLGLALASLGVITSLVAQHMY, AALYTHHQYIAGFIMTGAFAHGAIFFI, AIISHLSWASLFLGFHTLGLYVH, and FLVHHAIALGLHTTTLILV. 2 residues coordinate [4Fe-4S] cluster: Cys-559 and Cys-568. 2 helical membrane-spanning segments follow: residues 575–596 and 643–665; these read AFYLAVFWMLNTIGWVTFYWHW and LSVWAWMFLFGHLVWATGFMFLI. Residues His-654, Met-662, and Tyr-670 each contribute to the chlorophyll a site. Trp-671 serves as a coordination point for phylloquinone. The helical transmembrane segment at 707–727 threads the bilayer; sequence LVGLAHFSVGYIFTYAAFLIA.

Belongs to the PsaA/PsaB family. The PsaA/B heterodimer binds the P700 chlorophyll special pair and subsequent electron acceptors. PSI consists of a core antenna complex that captures photons, and an electron transfer chain that converts photonic excitation into a charge separation. The eukaryotic PSI reaction center is composed of at least 11 subunits. P700 is a chlorophyll a/chlorophyll a' dimer, A0 is one or more chlorophyll a, A1 is one or both phylloquinones and FX is a shared 4Fe-4S iron-sulfur center. serves as cofactor.

The protein localises to the plastid. It is found in the chloroplast thylakoid membrane. The catalysed reaction is reduced [plastocyanin] + hnu + oxidized [2Fe-2S]-[ferredoxin] = oxidized [plastocyanin] + reduced [2Fe-2S]-[ferredoxin]. Its function is as follows. PsaA and PsaB bind P700, the primary electron donor of photosystem I (PSI), as well as the electron acceptors A0, A1 and FX. PSI is a plastocyanin-ferredoxin oxidoreductase, converting photonic excitation into a charge separation, which transfers an electron from the donor P700 chlorophyll pair to the spectroscopically characterized acceptors A0, A1, FX, FA and FB in turn. Oxidized P700 is reduced on the lumenal side of the thylakoid membrane by plastocyanin. The polypeptide is Photosystem I P700 chlorophyll a apoprotein A2 (Nandina domestica (Heavenly bamboo)).